Consider the following 578-residue polypeptide: Proline--tRNA ligase (578 aa).

Belongs to the class-II aminoacyl-tRNA synthetase family. ProS type 1 subfamily. In terms of assembly, homodimer.

Its subcellular location is the cytoplasm. It catalyses the reaction tRNA(Pro) + L-proline + ATP = L-prolyl-tRNA(Pro) + AMP + diphosphate. In terms of biological role, catalyzes the attachment of proline to tRNA(Pro) in a two-step reaction: proline is first activated by ATP to form Pro-AMP and then transferred to the acceptor end of tRNA(Pro). As ProRS can inadvertently accommodate and process non-cognate amino acids such as alanine and cysteine, to avoid such errors it has two additional distinct editing activities against alanine. One activity is designated as 'pretransfer' editing and involves the tRNA(Pro)-independent hydrolysis of activated Ala-AMP. The other activity is designated 'posttransfer' editing and involves deacylation of mischarged Ala-tRNA(Pro). The misacylated Cys-tRNA(Pro) is not edited by ProRS. The polypeptide is Proline--tRNA ligase (Burkholderia thailandensis (strain ATCC 700388 / DSM 13276 / CCUG 48851 / CIP 106301 / E264)).